We begin with the raw amino-acid sequence, 204 residues long: Terpene cyclase trt1 (204 aa).

Helical transmembrane passes span 44–64, 67–87, 103–122, 132–154, and 169–189; these read FMSI…YPIA, HWAG…FIVA, FARL…HLAL, FFWS…LVCR, and WFYI…FFYF.

Belongs to the paxB family.

It localises to the membrane. It functions in the pathway secondary metabolite biosynthesis; terpenoid biosynthesis. Its function is as follows. Terpene cyclase; part of the gene cluster that mediates the biosynthesis of terretonin, a fungal meroterpenoid that acts as a mycotoxin. The first step of the pathway is the synthesis of 3,5-dimethylorsellinic acid (DMOA) by the polyketide synthase trt4. DMOA is then prenylated into farnesyl-DMOA by the polyprenyl transferase trt2. Methylation by the methyltransferase trt5 then leads to farnesyl-DMOA methyl ester which is further subject to epoxidation by the FAD-dependent monooxygenase trt8 to yield epoxyfarnesyl-DMOA methyl ester. Cyclization of epoxyfarnesyl-DMOA methyl ester by the terpene cyclase trt1 leads to a tetracycle intermediate which is in turn converted to preterretonin. Dehydrogenase trt9 comes next to transform preterretonin to preterrenoid. The FAD-dependent monooxygenase trt3 is then required for the C-hydroxylation at C16 of preterrenoid to yield terrenoid. The cytochrome P450 trt6 catalyzes three successive oxidations to transform terrenoid into an unstable intermediate, which then undergoes the D-ring expansion and unusual rearrangement of the methoxy group to afford the core skeleton of terretonin. Trt14 catalyzes the D-ring expansion of terretonin involving intramolecular methoxy rearrangement as well as the hydrolysis of the expanded D-ring and the methyl ester moiety. Finally, the nonheme iron-dependent dioxygenase trt7 accomplishes the last two oxidation reactions steps to complete the biosynthesis of terretonin. Terretonin C is produced via spontaneous decarboxylation of the terretonin precursor. Another shunt product of the terretonin biosynthesis is dihydrofarnesyl-DMOA, derived from epoxyfarnesyl-DMOA through hydrolysis of the epoxide. This is Terpene cyclase trt1 from Aspergillus terreus (strain NIH 2624 / FGSC A1156).